The chain runs to 114 residues: MQIQNNLFFCCYTVMSAIFKWLLLYSLPALCFLLGTQESESFHSKAEILVTLSQVIISPAGPHALTWTTHFSPSVIIILVPCWWHAVIVTQHPVANCYVTNHLNIQWLELKAGS.

Helical transmembrane passes span 14 to 34 (VMSA…CFLL) and 75 to 95 (VIII…HPVA).

It is found in the membrane. This is an uncharacterized protein from Homo sapiens (Human).